Consider the following 751-residue polypeptide: Photosystem I P700 chlorophyll a apoprotein A1 (751 aa).

8 consecutive transmembrane segments (helical) span residues 73 to 96 (VFSA…FHGA), 159 to 182 (LYAT…FHYH), 198 to 222 (MNHH…HISL), 294 to 312 (EAHH…GHQY), 349 to 372 (WHAQ…HHMY), 388 to 414 (LSLF…IFMV), 436 to 458 (AIIS…LYIH), and 533 to 551 (FLVH…LILL). 2 residues coordinate [4Fe-4S] cluster: Cys575 and Cys584. 2 helical membrane passes run 591-612 (HVFL…HFSW) and 665-687 (LSAY…MFLF). His676 is a chlorophyll a' binding site. The chlorophyll a site is built by Met684 and Tyr692. Trp693 serves as a coordination point for phylloquinone. Residues 725 to 745 (AVGVAHYLLGGIATTWSFFLA) form a helical membrane-spanning segment.

This sequence belongs to the PsaA/PsaB family. The PsaA/B heterodimer binds the P700 chlorophyll special pair and subsequent electron acceptors. PSI consists of a core antenna complex that captures photons, and an electron transfer chain that converts photonic excitation into a charge separation. The eukaryotic PSI reaction center is composed of at least 11 subunits. Requires P700 is a chlorophyll a/chlorophyll a' dimer, A0 is one or more chlorophyll a, A1 is one or both phylloquinones and FX is a shared 4Fe-4S iron-sulfur center. as cofactor.

It is found in the plastid. It localises to the chloroplast thylakoid membrane. The enzyme catalyses reduced [plastocyanin] + hnu + oxidized [2Fe-2S]-[ferredoxin] = oxidized [plastocyanin] + reduced [2Fe-2S]-[ferredoxin]. In terms of biological role, psaA and PsaB bind P700, the primary electron donor of photosystem I (PSI), as well as the electron acceptors A0, A1 and FX. PSI is a plastocyanin/cytochrome c6-ferredoxin oxidoreductase, converting photonic excitation into a charge separation, which transfers an electron from the donor P700 chlorophyll pair to the spectroscopically characterized acceptors A0, A1, FX, FA and FB in turn. Oxidized P700 is reduced on the lumenal side of the thylakoid membrane by plastocyanin or cytochrome c6. This Oltmannsiellopsis viridis (Marine flagellate) protein is Photosystem I P700 chlorophyll a apoprotein A1.